The following is a 631-amino-acid chain: Phosphomethylpyrimidine synthase (631 aa).

The disordered stretch occupies residues threonine 54–tyrosine 80. Positions glycine 58–threonine 67 are enriched in basic and acidic residues. Substrate contacts are provided by residues asparagine 239, methionine 268, tyrosine 297, histidine 333, serine 353 to glycine 355, aspartate 394 to arginine 397, and glutamate 433. Histidine 437 is a binding site for Zn(2+). Tyrosine 460 is a binding site for substrate. Histidine 501 contributes to the Zn(2+) binding site. Cysteine 581, cysteine 584, and cysteine 589 together coordinate [4Fe-4S] cluster.

The protein belongs to the ThiC family. As to quaternary structure, homodimer. Requires [4Fe-4S] cluster as cofactor.

It carries out the reaction 5-amino-1-(5-phospho-beta-D-ribosyl)imidazole + S-adenosyl-L-methionine = 4-amino-2-methyl-5-(phosphooxymethyl)pyrimidine + CO + 5'-deoxyadenosine + formate + L-methionine + 3 H(+). The protein operates within cofactor biosynthesis; thiamine diphosphate biosynthesis. In terms of biological role, catalyzes the synthesis of the hydroxymethylpyrimidine phosphate (HMP-P) moiety of thiamine from aminoimidazole ribotide (AIR) in a radical S-adenosyl-L-methionine (SAM)-dependent reaction. The chain is Phosphomethylpyrimidine synthase from Klebsiella pneumoniae subsp. pneumoniae (strain ATCC 700721 / MGH 78578).